A 510-amino-acid chain; its full sequence is ATP synthase subunit alpha (510 aa).

169–176 (GDRQTGKT) contacts ATP.

The protein belongs to the ATPase alpha/beta chains family. In terms of assembly, F-type ATPases have 2 components, CF(1) - the catalytic core - and CF(0) - the membrane proton channel. CF(1) has five subunits: alpha(3), beta(3), gamma(1), delta(1), epsilon(1). CF(0) has three main subunits: a(1), b(2) and c(9-12). The alpha and beta chains form an alternating ring which encloses part of the gamma chain. CF(1) is attached to CF(0) by a central stalk formed by the gamma and epsilon chains, while a peripheral stalk is formed by the delta and b chains.

The protein resides in the cell inner membrane. The enzyme catalyses ATP + H2O + 4 H(+)(in) = ADP + phosphate + 5 H(+)(out). In terms of biological role, produces ATP from ADP in the presence of a proton gradient across the membrane. The alpha chain is a regulatory subunit. This Anaeromyxobacter dehalogenans (strain 2CP-C) protein is ATP synthase subunit alpha.